The primary structure comprises 214 residues: dITP/XTP pyrophosphatase (214 aa).

Residue 16–21 (THNPGK) participates in substrate binding. Positions 48 and 77 each coordinate Mg(2+). Catalysis depends on aspartate 77, which acts as the Proton acceptor. Substrate is bound by residues serine 78, 163-166 (FGYD), lysine 186, and 198-199 (HR).

Belongs to the HAM1 NTPase family. Homodimer. Requires Mg(2+) as cofactor.

The enzyme catalyses XTP + H2O = XMP + diphosphate + H(+). It catalyses the reaction dITP + H2O = dIMP + diphosphate + H(+). It carries out the reaction ITP + H2O = IMP + diphosphate + H(+). Pyrophosphatase that catalyzes the hydrolysis of nucleoside triphosphates to their monophosphate derivatives, with a high preference for the non-canonical purine nucleotides XTP (xanthosine triphosphate), dITP (deoxyinosine triphosphate) and ITP. Seems to function as a house-cleaning enzyme that removes non-canonical purine nucleotides from the nucleotide pool, thus preventing their incorporation into DNA/RNA and avoiding chromosomal lesions. This is dITP/XTP pyrophosphatase from Bradyrhizobium sp. (strain BTAi1 / ATCC BAA-1182).